We begin with the raw amino-acid sequence, 144 residues long: 3-hydroxyacyl-[acyl-carrier-protein] dehydratase FabZ (144 aa).

His48 is a catalytic residue.

This sequence belongs to the thioester dehydratase family. FabZ subfamily.

Its subcellular location is the cytoplasm. It carries out the reaction a (3R)-hydroxyacyl-[ACP] = a (2E)-enoyl-[ACP] + H2O. Involved in unsaturated fatty acids biosynthesis. Catalyzes the dehydration of short chain beta-hydroxyacyl-ACPs and long chain saturated and unsaturated beta-hydroxyacyl-ACPs. The protein is 3-hydroxyacyl-[acyl-carrier-protein] dehydratase FabZ of Bacillus thuringiensis (strain Al Hakam).